The primary structure comprises 301 residues: Ribosomal protein L11 methyltransferase (301 aa).

S-adenosyl-L-methionine-binding residues include Thr146, Gly167, Asp189, and Asn234.

The protein belongs to the methyltransferase superfamily. PrmA family.

It is found in the cytoplasm. The catalysed reaction is L-lysyl-[protein] + 3 S-adenosyl-L-methionine = N(6),N(6),N(6)-trimethyl-L-lysyl-[protein] + 3 S-adenosyl-L-homocysteine + 3 H(+). In terms of biological role, methylates ribosomal protein L11. The sequence is that of Ribosomal protein L11 methyltransferase from Acinetobacter baumannii (strain AB307-0294).